A 388-amino-acid polypeptide reads, in one-letter code: Succinate--CoA ligase [ADP-forming] subunit beta (388 aa).

One can recognise an ATP-grasp domain in the interval 9–244 (KQLFREYGLP…TTQDDEREMH (236 aa)). Residues K46, 53–55 (GRG), E99, S102, and E107 contribute to the ATP site. N199 and D213 together coordinate Mg(2+). Residues N264 and 321 to 323 (GIV) contribute to the substrate site.

It belongs to the succinate/malate CoA ligase beta subunit family. In terms of assembly, heterotetramer of two alpha and two beta subunits. Requires Mg(2+) as cofactor.

The catalysed reaction is succinate + ATP + CoA = succinyl-CoA + ADP + phosphate. The enzyme catalyses GTP + succinate + CoA = succinyl-CoA + GDP + phosphate. The protein operates within carbohydrate metabolism; tricarboxylic acid cycle; succinate from succinyl-CoA (ligase route): step 1/1. In terms of biological role, succinyl-CoA synthetase functions in the citric acid cycle (TCA), coupling the hydrolysis of succinyl-CoA to the synthesis of either ATP or GTP and thus represents the only step of substrate-level phosphorylation in the TCA. The beta subunit provides nucleotide specificity of the enzyme and binds the substrate succinate, while the binding sites for coenzyme A and phosphate are found in the alpha subunit. In Psychromonas ingrahamii (strain DSM 17664 / CCUG 51855 / 37), this protein is Succinate--CoA ligase [ADP-forming] subunit beta.